A 164-amino-acid polypeptide reads, in one-letter code: HTH-type transcriptional regulator IscR (164 aa).

In terms of domain architecture, HTH rrf2-type spans 2–131; it reads RLTSKGRYAV…NNITLDELVN (130 aa). Residues 28 to 51 constitute a DNA-binding region (H-T-H motif); that stretch reads LADISERQGISLSYLEQLFSRLRK. Positions 92, 98, and 104 each coordinate [2Fe-2S] cluster.

[2Fe-2S] cluster serves as cofactor.

Regulates the transcription of several operons and genes involved in the biogenesis of Fe-S clusters and Fe-S-containing proteins. This is HTH-type transcriptional regulator IscR from Pectobacterium atrosepticum (strain SCRI 1043 / ATCC BAA-672) (Erwinia carotovora subsp. atroseptica).